The primary structure comprises 402 residues: Argininosuccinate synthase (402 aa).

Residues 9 to 17 (AYSGGLDTS) and alanine 36 each bind ATP. Residues tyrosine 87 and serine 92 each coordinate L-citrulline. Glycine 117 is a binding site for ATP. Residues threonine 119, asparagine 123, and aspartate 124 each coordinate L-aspartate. Residue asparagine 123 participates in L-citrulline binding. Arginine 127, serine 176, serine 185, glutamate 261, and tyrosine 273 together coordinate L-citrulline.

This sequence belongs to the argininosuccinate synthase family. Type 1 subfamily. As to quaternary structure, homotetramer.

The protein localises to the cytoplasm. The enzyme catalyses L-citrulline + L-aspartate + ATP = 2-(N(omega)-L-arginino)succinate + AMP + diphosphate + H(+). Its pathway is amino-acid biosynthesis; L-arginine biosynthesis; L-arginine from L-ornithine and carbamoyl phosphate: step 2/3. This chain is Argininosuccinate synthase, found in Deinococcus radiodurans (strain ATCC 13939 / DSM 20539 / JCM 16871 / CCUG 27074 / LMG 4051 / NBRC 15346 / NCIMB 9279 / VKM B-1422 / R1).